The primary structure comprises 162 residues: MTDMNPDIEKDQTSDEVTVETTSVFRADFLSELDAPAQAGTESAVSGVEGLPPGSALLVVKRGPNAGSRFLLDQAITSAGRHPDSDIFLDDVTVSRRHAEFRLENNEFNVVDVGSLNGTYVNREPVDSAVLANGDEVQIGKFRLVFLTGPKQGEDDGSTGGP.

The residue at position 21 (Thr-21) is a Phosphothreonine; by PknG. Position 22 is a phosphothreonine; by PknB (Thr-22). Residues 77–126 (TSAGRHPDSDIFLDDVTVSRRHAEFRLENNEFNVVDVGSLNGTYVNREPV) enclose the FHA domain.

In terms of assembly, monomer. Phosphorylated on Thr-22 by PknB. Phosphorylated on Thr-21 by PknG. Phosphorylation at either Thr-21 or Thr-22 prevents binding to target enzymes.

Functionally, involved in regulation of glutamate metabolism. This chain is Glycogen accumulation regulator GarA (garA), found in Mycobacterium tuberculosis (strain CDC 1551 / Oshkosh).